The primary structure comprises 78 residues: Chondrosarcoma-associated gene 1 protein (78 aa).

The N-terminal stretch at 1 to 19 (MSATTACWPAFTVLGEARG) is a signal peptide. Residues 35–78 (KMSRKPRASSPFSNNHPSTPKRFPRQPRREKGPVKEVPGTKGSP) form a disordered region.

In terms of tissue distribution, expressed in chondrosarcoma, melanoma, cartilage and testis, but not in other normal tissues.

The protein resides in the cytoplasm. It is found in the cytoskeleton. Its subcellular location is the microtubule organizing center. It localises to the centrosome. The protein localises to the spindle pole. Functionally, may play an important role in maintaining centrosome integrity during mitosis. This Homo sapiens (Human) protein is Chondrosarcoma-associated gene 1 protein.